Consider the following 274-residue polypeptide: tRNA pseudouridine synthase A (274 aa).

The active-site Nucleophile is the Asp-57. A substrate-binding site is contributed by Tyr-115.

This sequence belongs to the tRNA pseudouridine synthase TruA family. As to quaternary structure, homodimer.

It catalyses the reaction uridine(38/39/40) in tRNA = pseudouridine(38/39/40) in tRNA. Functionally, formation of pseudouridine at positions 38, 39 and 40 in the anticodon stem and loop of transfer RNAs. This Frankia casuarinae (strain DSM 45818 / CECT 9043 / HFP020203 / CcI3) protein is tRNA pseudouridine synthase A.